A 240-amino-acid chain; its full sequence is Ribonuclease PH (240 aa).

Residues arginine 86 and 124-126 (GTR) contribute to the phosphate site.

The protein belongs to the RNase PH family. In terms of assembly, homohexameric ring arranged as a trimer of dimers.

The catalysed reaction is tRNA(n+1) + phosphate = tRNA(n) + a ribonucleoside 5'-diphosphate. Its function is as follows. Phosphorolytic 3'-5' exoribonuclease that plays an important role in tRNA 3'-end maturation. Removes nucleotide residues following the 3'-CCA terminus of tRNAs; can also add nucleotides to the ends of RNA molecules by using nucleoside diphosphates as substrates, but this may not be physiologically important. Probably plays a role in initiation of 16S rRNA degradation (leading to ribosome degradation) during starvation. The protein is Ribonuclease PH of Rickettsia prowazekii (strain Madrid E).